The primary structure comprises 631 residues: Guanylate-binding protein 4 (631 aa).

In terms of domain architecture, GB1/RHD3-type G spans 33 to 283 (SQPVVVVAIV…FASYIFTYAK (251 aa)). Residues 43-50 (GWSHTGKS) and 103-107 (DTEGL) each bind GTP. A coiled-coil region spans residues 492 to 592 (IAEKHTKKEA…GHNIKEMKQN (101 aa)).

Belongs to the TRAFAC class dynamin-like GTPase superfamily. GB1/RHD3 GTPase family. GB1 subfamily. In terms of assembly, heterodimer with other family members, including GBP1, GBP2 and GBP5. Dimerization regulates subcellular location. Interacts with IRF7; preventing interaction between TRAF6 and IRF7, resulting in impaired TRAF6-mediated IRF7 ubiquitination. As to expression, mainly expressed in organs of the immune system, such as spleen and lymph nodes.

It is found in the golgi apparatus membrane. Its subcellular location is the cytoplasm. The protein localises to the nucleus. It localises to the perinuclear region. It carries out the reaction GTP + H2O = GDP + phosphate + H(+). Functionally, interferon (IFN)-inducible GTPase that plays important roles in innate immunity against a diverse range of bacterial, viral and protozoan pathogens. Negatively regulates the antiviral response by inhibiting activation of IRF7 transcription factor. In Mus musculus (Mouse), this protein is Guanylate-binding protein 4.